The sequence spans 410 residues: WD repeat-containing protein jip5 (410 aa).

6 WD repeats span residues 9 to 48 (PLSADLFAQAIHPSEPIISVGLSTGHVQTFRLPTEEEEEH), 74 to 113 (RHKGSCRTLTFGIDGEMLYSAGTDGLVKAAKAETGVVENK), 119 to 160 (AKDG…SKVA), 223 to 264 (VSST…DQDE), 273 to 316 (GGGE…VVSE), and 320 to 357 (DETEGVIGLGFDVEGHMVSGGGQIVKVWHEAADSIGGE). Residues 41 to 65 (PTEEEEEHSDDEQASVSSSRNGKGH) are disordered. A compositionally biased stretch (acidic residues) spans 43–53 (EEEEEHSDDEQ). The disordered stretch occupies residues 354–410 (IGGEKRGFGGDSDDSDDDSDDSDHEPKQGDDSRRKRKKQKGKDRGKGPEIMAFADLD). The segment covering 364–376 (DSDDSDDDSDDSD) has biased composition (acidic residues). Over residues 377–386 (HEPKQGDDSR) the composition is skewed to basic and acidic residues.

The protein belongs to the WD repeat WDR55 family.

It is found in the nucleus. The protein localises to the nucleolus. This chain is WD repeat-containing protein jip5 (jip5), found in Emericella nidulans (strain FGSC A4 / ATCC 38163 / CBS 112.46 / NRRL 194 / M139) (Aspergillus nidulans).